Consider the following 287-residue polypeptide: 4-hydroxybenzoate octaprenyltransferase (287 aa).

8 helical membrane-spanning segments follow: residues 19-39 (PIGSLLLLWPTLWALWLAADG), 43-63 (LHVLVIFTIGTVLMRSAGCVI), 94-116 (LALAAGLSALSFVLILPLDPLVI), 135-155 (FFAIPQAYLGIAFGFGIPMGF), 160-180 (GEVPPIAWVMLLANIFWAVAY), 207-227 (FDVAAVMLCYAVALGLLGWVG), 234-254 (ALYFAGLAVAAGMALYHYTLI), and 269-286 (NNWLGAAVFAGLALDYLI).

The protein belongs to the UbiA prenyltransferase family. It depends on Mg(2+) as a cofactor.

The protein localises to the cell inner membrane. It carries out the reaction all-trans-octaprenyl diphosphate + 4-hydroxybenzoate = 4-hydroxy-3-(all-trans-octaprenyl)benzoate + diphosphate. It participates in cofactor biosynthesis; ubiquinone biosynthesis. Its function is as follows. Catalyzes the prenylation of para-hydroxybenzoate (PHB) with an all-trans polyprenyl group. Mediates the second step in the final reaction sequence of ubiquinone-8 (UQ-8) biosynthesis, which is the condensation of the polyisoprenoid side chain with PHB, generating the first membrane-bound Q intermediate 3-octaprenyl-4-hydroxybenzoate. The polypeptide is 4-hydroxybenzoate octaprenyltransferase (Azoarcus sp. (strain BH72)).